We begin with the raw amino-acid sequence, 481 residues long: Phenylalanine--tRNA ligase alpha subunit (481 aa).

Residues T322, Q361–E363, and Y401 contribute to the L-phenylalanine site. Residue E403 participates in Mg(2+) binding. Residue F426 participates in L-phenylalanine binding.

It belongs to the class-II aminoacyl-tRNA synthetase family. Phe-tRNA synthetase alpha subunit type 2 subfamily. Tetramer of two alpha and two beta subunits. Requires Mg(2+) as cofactor.

It localises to the cytoplasm. The enzyme catalyses tRNA(Phe) + L-phenylalanine + ATP = L-phenylalanyl-tRNA(Phe) + AMP + diphosphate + H(+). This chain is Phenylalanine--tRNA ligase alpha subunit, found in Methanoculleus marisnigri (strain ATCC 35101 / DSM 1498 / JR1).